A 691-amino-acid polypeptide reads, in one-letter code: Elongation factor G (691 aa).

One can recognise a tr-type G domain in the interval Glu8 to Ile282. Residues Ala17–Thr24, Asp81–His85, and Asn135–Asp138 contribute to the GTP site.

The protein belongs to the TRAFAC class translation factor GTPase superfamily. Classic translation factor GTPase family. EF-G/EF-2 subfamily.

The protein localises to the cytoplasm. Functionally, catalyzes the GTP-dependent ribosomal translocation step during translation elongation. During this step, the ribosome changes from the pre-translocational (PRE) to the post-translocational (POST) state as the newly formed A-site-bound peptidyl-tRNA and P-site-bound deacylated tRNA move to the P and E sites, respectively. Catalyzes the coordinated movement of the two tRNA molecules, the mRNA and conformational changes in the ribosome. The chain is Elongation factor G from Thermosynechococcus vestitus (strain NIES-2133 / IAM M-273 / BP-1).